Consider the following 220-residue polypeptide: Putative amino-acid transporter YisU (220 aa).

6 helical membrane passes run phenylalanine 15 to leucine 35, threonine 67 to phenylalanine 87, threonine 89 to isoleucine 109, alanine 128 to isoleucine 148, tryptophan 161 to alanine 181, and methionine 195 to valine 215.

The protein belongs to the LysE/ArgO transporter (TC 2.A.75) family.

Its subcellular location is the cell membrane. This Bacillus subtilis (strain 168) protein is Putative amino-acid transporter YisU (yisU).